The chain runs to 93 residues: Large ribosomal subunit protein bL27 (93 aa).

Positions 1–9 are excised as a propeptide; it reads MLRLDLQFF.

It belongs to the bacterial ribosomal protein bL27 family. Post-translationally, the N-terminus is cleaved by ribosomal processing cysteine protease Prp.

The protein is Large ribosomal subunit protein bL27 of Bacillus licheniformis (strain ATCC 14580 / DSM 13 / JCM 2505 / CCUG 7422 / NBRC 12200 / NCIMB 9375 / NCTC 10341 / NRRL NRS-1264 / Gibson 46).